A 68-amino-acid chain; its full sequence is Cytochrome c3 (68 aa).

Heme is bound by residues His-17, His-20, Cys-26, Cys-29, His-30, His-45, Cys-49, Cys-52, His-53, Cys-62, Cys-65, and His-66.

In terms of processing, binds 3 heme groups per subunit.

Its function is as follows. Participates in sulfate respiration coupled with phosphorylation by transferring electrons from the enzyme dehydrogenase to ferredoxin. The chain is Cytochrome c3 (cyd) from Desulfuromonas acetoxidans (Chloropseudomonas ethylica).